Reading from the N-terminus, the 136-residue chain is Small cardioactive peptides (136 aa).

A signal peptide spans 1–24 (METSVSRVTVSLTLLVLIICSADA). A methionine amide mark is found at methionine 33 and methionine 46. The propeptide at 49–135 (SQMKTETGTD…VLSKLKSLLQ (87 aa)) is carboxy-terminal peptide.

It belongs to the SCP family. Contains three disulfide bonds. As to expression, highly expressed in the buccal ganglion.

The protein resides in the secreted. Functionally, involved in the stimulation of contractile activity in the gut, the increase of the amplitude of the heart beat, and enhancement of the contractile response of the radula closer muscle. This chain is Small cardioactive peptides, found in Aplysia californica (California sea hare).